A 71-amino-acid polypeptide reads, in one-letter code: Conotoxin PnMEKL-032 (71 aa).

The N-terminal stretch at 1–19 (MQKLIILLLVAAVLMSTQA) is a signal peptide. Residues 20–46 (LFQEKRLKEKINFLSKEKADAEKQQKR) constitute a propeptide that is removed on maturation. Intrachain disulfides connect Cys-48–Cys-62, Cys-55–Cys-66, and Cys-61–Cys-70.

This sequence belongs to the conotoxin O2 superfamily. Expressed by the venom duct.

The protein resides in the secreted. This is Conotoxin PnMEKL-032 from Conus pennaceus (Feathered cone).